The chain runs to 275 residues: Dermonecrotic toxin LarSicTox-alphaIII1 (275 aa).

His5 is an active-site residue. 2 residues coordinate Mg(2+): Glu25 and Asp27. The active-site Nucleophile is the His41. 2 disulfides stabilise this stretch: Cys45–Cys51 and Cys47–Cys190. Asp85 is a binding site for Mg(2+). Asn252 carries N-linked (GlcNAc...) asparagine glycosylation.

It belongs to the arthropod phospholipase D family. Class II subfamily. Mg(2+) is required as a cofactor. Expressed by the venom gland.

The protein localises to the secreted. The enzyme catalyses an N-(acyl)-sphingosylphosphocholine = an N-(acyl)-sphingosyl-1,3-cyclic phosphate + choline. It catalyses the reaction an N-(acyl)-sphingosylphosphoethanolamine = an N-(acyl)-sphingosyl-1,3-cyclic phosphate + ethanolamine. It carries out the reaction a 1-acyl-sn-glycero-3-phosphocholine = a 1-acyl-sn-glycero-2,3-cyclic phosphate + choline. The catalysed reaction is a 1-acyl-sn-glycero-3-phosphoethanolamine = a 1-acyl-sn-glycero-2,3-cyclic phosphate + ethanolamine. Functionally, dermonecrotic toxins cleave the phosphodiester linkage between the phosphate and headgroup of certain phospholipids (sphingolipid and lysolipid substrates), forming an alcohol (often choline) and a cyclic phosphate. This toxin acts on sphingomyelin (SM). It may also act on ceramide phosphoethanolamine (CPE), lysophosphatidylcholine (LPC) and lysophosphatidylethanolamine (LPE), but not on lysophosphatidylserine (LPS), and lysophosphatidylglycerol (LPG). It acts by transphosphatidylation, releasing exclusively cyclic phosphate products as second products. Induces dermonecrosis, hemolysis, increased vascular permeability, edema, inflammatory response, and platelet aggregation. The chain is Dermonecrotic toxin LarSicTox-alphaIII1 from Loxosceles arizonica (Arizona brown spider).